The primary structure comprises 199 residues: Probable thymidylate kinase (199 aa).

ATP is bound at residue 9-16 (GIDGCGKT).

This sequence belongs to the thymidylate kinase family.

It catalyses the reaction dTMP + ATP = dTDP + ADP. The polypeptide is Probable thymidylate kinase (Methanococcus maripaludis (strain C7 / ATCC BAA-1331)).